Consider the following 319-residue polypeptide: G-protein coupled receptor 55 (319 aa).

At 1 to 21 (MSQQNTSGDCLFDGVNELMKT) the chain is on the extracellular side. An N-linked (GlcNAc...) asparagine glycan is attached at Asn-5. A helical membrane pass occupies residues 22–42 (LQFAVHIPTFVLGLLLNLLAI). Residues 43–58 (HGFSTFLKNRWPDYAA) are Cytoplasmic-facing. The helical transmembrane segment at 59-79 (TSIYMINLAVFDLLLVLSLPF) threads the bilayer. The Extracellular portion of the chain corresponds to 80–94 (KMVLSQVQSPFPSLC). A helical transmembrane segment spans residues 95–115 (TLVECLYFVSMYGSVFTICFI). Residues 116–137 (SMDRFLAIRYPLLVSHLRSPRK) are Cytoplasmic-facing. Residues 138 to 158 (IFGICCTIWVLVWTGSIPIYS) traverse the membrane as a helical segment. Residues 159-180 (FHGKVEKYMCFHNMSDDTWSAK) are Extracellular-facing. A glycan (N-linked (GlcNAc...) asparagine) is linked at Asn-171. The helical transmembrane segment at 181–201 (VFFPLEVFGFLLPMGIMGFCC) threads the bilayer. Residues 202 to 231 (SRSIHILLGRRDHTQDWVQQKACIYSIAAS) lie on the Cytoplasmic side of the membrane. Residues 232-252 (LAVFVVSFLPVHLGFFLQFLV) form a helical membrane-spanning segment. Topologically, residues 253–271 (RNSFIVECRAKQSISFFLQ) are extracellular. A helical membrane pass occupies residues 272 to 292 (LSMCFSNVNCCLDVFCYYFVI). The Cytoplasmic portion of the chain corresponds to 293-319 (KEFRMNIRAHRPSRVQLVLQDTTISRG).

It belongs to the G-protein coupled receptor 1 family. As to expression, expressed in the caudate nucleus and putamen, but not detected in the hippocampus, thalamus, pons cerebellum, frontal cortex of the brain or in the liver. Expressed in osteoclasts and osteoblasts. Higly expressed in macrophages and B-cells.

It localises to the cell membrane. G-protein coupled receptor that binds to several ligands including 2-arachidonoyl lysophosphatidylinositol or lysophosphatidylglucoside with high affinity, leading to rapid and transient activation of numerous intracellular signaling pathways. Induces the Ca(2+) release from intracellular stores via ERK, the heterotrimeric G protein GNA13 and RHOA leading to morphological changes including cell rounding and stress fiber formation. In macrophages, acts downstream of lysophosphatidylglucoside to inhibit the translocation of the phospholipid-transporting ABCA1 to plasma membrane and subsequent cholesterol efflux leading to lipid accumulation and foam cell formation. The polypeptide is G-protein coupled receptor 55 (GPR55) (Homo sapiens (Human)).